Here is an 81-residue protein sequence, read N- to C-terminus: NAD(P)H-quinone oxidoreductase subunit O (81 aa).

This sequence belongs to the complex I NdhO subunit family. In terms of assembly, NDH-1 can be composed of about 15 different subunits; different subcomplexes with different compositions have been identified which probably have different functions.

It localises to the cellular thylakoid membrane. The enzyme catalyses a plastoquinone + NADH + (n+1) H(+)(in) = a plastoquinol + NAD(+) + n H(+)(out). It catalyses the reaction a plastoquinone + NADPH + (n+1) H(+)(in) = a plastoquinol + NADP(+) + n H(+)(out). Functionally, NDH-1 shuttles electrons from an unknown electron donor, via FMN and iron-sulfur (Fe-S) centers, to quinones in the respiratory and/or the photosynthetic chain. The immediate electron acceptor for the enzyme in this species is believed to be plastoquinone. Couples the redox reaction to proton translocation, and thus conserves the redox energy in a proton gradient. Cyanobacterial NDH-1 also plays a role in inorganic carbon-concentration. The chain is NAD(P)H-quinone oxidoreductase subunit O from Prochlorococcus marinus (strain MIT 9303).